The sequence spans 351 residues: Protein EXPRESSION OF TERPENOIDS 1 (351 aa).

The disordered stretch occupies residues 1–23 (MANFFSLGGNQEQQHQEISSSQA). Low complexity predominate over residues 11-22 (QEQQHQEISSSQ). The Zn(2+) site is built by C129, C132, C140, C145, C149, and C156. A DNA-binding region (zn(2)-C6 fungal-type; degenerate) is located at residues 129–156 (CQDCGNQAKKDCQHMRCRTCCKSRGFQC). The interval 170 to 219 (RRERQQQLAALQQQQQGHNNNNNNHKNKRQREDPSASSLVSTRLPSNTNG) is disordered. The segment covering 175-193 (QQLAALQQQQQGHNNNNNN) has biased composition (low complexity). Over residues 204–219 (SASSLVSTRLPSNTNG) the composition is skewed to polar residues. The Required for homo- and heterodimerization motif lies at 258–261 (IGGH). Residues 286–320 (TSSGGSAGGVQHHHHNSAAVATATTTSGGDATAAG) form a disordered region. The segment covering 303–320 (AAVATATTTSGGDATAAG) has biased composition (low complexity).

This sequence belongs to the SHI protein family. Forms homodimers and heterodimers with LRP1.

It is found in the nucleus. Its function is as follows. Transcription activator involved in the transcriptional regulation of terpene biosynthesis in glandular trichomes. Binds to the promoter of the linalool synthase TPS5 and promotes TPS5 gene transactivation. Acts synergistically with MYC1 in the transactivation of TPS5. This Solanum lycopersicum (Tomato) protein is Protein EXPRESSION OF TERPENOIDS 1.